A 460-amino-acid polypeptide reads, in one-letter code: Xyloglucan 6-xylosyltransferase 1 (460 aa).

At 1–20 the chain is on the cytoplasmic side; sequence MIEKCIGAHRFRRLQRFMRQ. Residues 21-40 traverse the membrane as a helical; Signal-anchor for type II membrane protein segment; sequence GKVTILCLVLTVIVLRGTIG. The Lumenal portion of the chain corresponds to 41-460; that stretch reads AGKFGTPEKD…KAAKLSTTTT (420 aa). UDP-alpha-D-xylose is bound by residues G156 and 227 to 229; that span reads DSD. Residues D227 and D229 each contribute to the Mn(2+) site. H346 contributes to the substrate binding site. UDP-alpha-D-xylose is bound by residues H377, G380, and K382. Position 377 (H377) interacts with Mn(2+). Residues K382 and 389-390 each bind substrate; that span reads DY. N431 carries N-linked (GlcNAc...) asparagine glycosylation.

Belongs to the glycosyltransferase 34 family. Forms homodimer. Interacts with XXT2. The cofactor is Mn(2+).

It is found in the golgi apparatus membrane. It carries out the reaction Transfers an alpha-D-xylosyl residue from UDP-D-xylose to a glucose residue in xyloglucan, forming an alpha-(1-&gt;6)-D-xylosyl-D-glucose linkage.. It functions in the pathway protein modification; protein glycosylation. Xylosyltransferase specific to UDP-D-xylose that accepts both cellopentaose and cellohexaose as substrates, with a better use of cellohexaose, to produce xyloglucan. Adds preferentially the first xylosyl residue to the fourth glucosyl residue from the reducing end of both acceptors. Transfer one xylose mainly to the second glucose residue from the non-reducing end. The acceptor should have a minimum of four glucose residues. This Arabidopsis thaliana (Mouse-ear cress) protein is Xyloglucan 6-xylosyltransferase 1.